The sequence spans 418 residues: Elongation factor 1-gamma 2 (418 aa).

A GST N-terminal domain is found at 1–82 (MALVLHAGSG…YVTRSKADNP (82 aa)). One can recognise a GST C-terminal domain in the interval 87-215 (SLIEYAHIEQ…VKQAESVPPV (129 aa)). Residues 210 to 265 (ESVPPVQKKAPPPKEQKPKEAKKEAPKEAPKPKAVEKPEEEEEAPKPKPKNPLDLL) form a disordered region. A compositionally biased stretch (basic and acidic residues) spans 221–246 (PPKEQKPKEAKKEAPKEAPKPKAVEK). In terms of domain architecture, EF-1-gamma C-terminal spans 258 to 418 (PKNPLDLLPP…ESLLDAKCFK (161 aa)).

EF-1 is composed of four subunits: alpha, beta, delta, and gamma.

Functionally, probably plays a role in anchoring the complex to other cellular components. In Oryza sativa subsp. japonica (Rice), this protein is Elongation factor 1-gamma 2.